The primary structure comprises 93 residues: Precursor of CEP13 (93 aa).

The signal sequence occupies residues Met1–Ala27. The propeptide occupies Arg28–Glu78. The tract at residues Leu45–His93 is disordered. Hydroxyproline is present on residues Pro87 and Pro89.

Belongs to the C-terminally encoded plant signaling peptide (CEP) family. Interacts with CEP receptors (e.g. CEPR1 and CEPR2). The mature small signaling peptide is generated by proteolytic processing of the longer precursor.

The protein resides in the secreted. Its subcellular location is the extracellular space. The protein localises to the apoplast. Extracellular signaling peptide that may regulate primary root growth rate and systemic nitrogen (N)-demand signaling. The chain is Precursor of CEP13 from Arabidopsis thaliana (Mouse-ear cress).